The sequence spans 313 residues: Cyclin-dependent kinase B2-1 (313 aa).

Position 1 is an N-acetylmethionine (M1). Residues 14–304 (FEKLEKVGEG…AKMAMEHPYF (291 aa)) form the Protein kinase domain. ATP is bound by residues 20–28 (VGEGTYGKV) and K43. Y25 carries the post-translational modification Phosphotyrosine. D145 acts as the Proton acceptor in catalysis. A Phosphothreonine modification is found at T179.

This sequence belongs to the protein kinase superfamily. CMGC Ser/Thr protein kinase family. CDC2/CDKX subfamily. In terms of assembly, interacts with CYCD4-1 and CKS1. In terms of tissue distribution, expressed in root tips, shoot apical meristem, leaf primordia vascular tissues and tapetum of anthers.

It carries out the reaction L-seryl-[protein] + ATP = O-phospho-L-seryl-[protein] + ADP + H(+). It catalyses the reaction L-threonyl-[protein] + ATP = O-phospho-L-threonyl-[protein] + ADP + H(+). The enzyme catalyses [DNA-directed RNA polymerase] + ATP = phospho-[DNA-directed RNA polymerase] + ADP + H(+). The protein is Cyclin-dependent kinase B2-1 (CDKB2-1) of Arabidopsis thaliana (Mouse-ear cress).